A 368-amino-acid polypeptide reads, in one-letter code: Peptide chain release factor 2 (368 aa).

At Gln250 the chain carries N5-methylglutamine.

This sequence belongs to the prokaryotic/mitochondrial release factor family. Post-translationally, methylated by PrmC. Methylation increases the termination efficiency of RF2.

Its subcellular location is the cytoplasm. Peptide chain release factor 2 directs the termination of translation in response to the peptide chain termination codons UGA and UAA. This chain is Peptide chain release factor 2, found in Rickettsia africae (strain ESF-5).